Reading from the N-terminus, the 216-residue chain is Deoxyribose-phosphate aldolase (216 aa).

D89 serves as the catalytic Proton donor/acceptor. Residue K152 is the Schiff-base intermediate with acetaldehyde of the active site. Catalysis depends on K181, which acts as the Proton donor/acceptor.

The protein belongs to the DeoC/FbaB aldolase family. DeoC type 1 subfamily.

The protein resides in the cytoplasm. The enzyme catalyses 2-deoxy-D-ribose 5-phosphate = D-glyceraldehyde 3-phosphate + acetaldehyde. It participates in carbohydrate degradation; 2-deoxy-D-ribose 1-phosphate degradation; D-glyceraldehyde 3-phosphate and acetaldehyde from 2-deoxy-alpha-D-ribose 1-phosphate: step 2/2. In terms of biological role, catalyzes a reversible aldol reaction between acetaldehyde and D-glyceraldehyde 3-phosphate to generate 2-deoxy-D-ribose 5-phosphate. This Clostridium tetani (strain Massachusetts / E88) protein is Deoxyribose-phosphate aldolase.